Here is a 152-residue protein sequence, read N- to C-terminus: MEAQKLSVEAIEKGTVIDHIPAGRGLTILRQFKLLHYGNAVTVGFNLPSKTQGSKDIIKIKGVCLDDKAADRLALFAPEAVVNTIDNFKVVQKRHLTLPDEIAEVFRCPNPNCAGHGEPVKSRFYVKKHNGQTRLKCHYCEKTYNRDSVAEA.

Zn(2+) is bound by residues cysteine 108, cysteine 113, cysteine 137, and cysteine 140.

The protein belongs to the PyrI family. As to quaternary structure, contains catalytic and regulatory chains. It depends on Zn(2+) as a cofactor.

Involved in allosteric regulation of aspartate carbamoyltransferase. The polypeptide is Aspartate carbamoyltransferase regulatory chain (Neisseria gonorrhoeae (strain ATCC 700825 / FA 1090)).